The chain runs to 312 residues: Expansin-A24 (312 aa).

Residues 1 to 27 (MELLKRKLYAKILMMVMVIWIAPMTNG) form the signal peptide. A disordered region spans residues 31-86 (ASHVPGGRPGAHPSHGAHPAHGAHPSHGAHPSHGAHPSHGAHPSHGALPSHGGQVP). Residues 40-77 (GAHPSHGAHPAHGAHPSHGAHPSHGAHPSHGAHPSHGA) are compositionally biased toward low complexity. A run of 6 repeats spans residues 42-47 (HPSHGA), 48-53 (HPAHGA), 54-59 (HPSHGA), 60-65 (HPSHGA), 66-71 (HPSHGA), and 72-77 (HPSHGA). The interval 42 to 77 (HPSHGAHPAHGAHPSHGAHPSHGAHPSHGAHPSHGA) is 6 X 6 AA tandem repeats of H-P-S-H-G-A. Residues 108–218 (QGACGYGDLH…RRVPCAKIGG (111 aa)) form the Expansin-like EG45 domain. One can recognise an Expansin-like CBD domain in the interval 228-307 (HFLMILPYNV…DWKCNGQSFD (80 aa)).

Belongs to the expansin family. Expansin A subfamily.

It is found in the secreted. The protein localises to the cell wall. The protein resides in the membrane. Its function is as follows. Causes loosening and extension of plant cell walls by disrupting non-covalent bonding between cellulose microfibrils and matrix glucans. No enzymatic activity has been found. The polypeptide is Expansin-A24 (EXPA24) (Arabidopsis thaliana (Mouse-ear cress)).